Reading from the N-terminus, the 298-residue chain is uncharacterized protein (298 aa).

This is an uncharacterized protein from Orgyia pseudotsugata multicapsid polyhedrosis virus (OpMNPV).